We begin with the raw amino-acid sequence, 76 residues long: Tautomerase PptA (76 aa).

The active-site Proton acceptor; via imino nitrogen is P2.

Belongs to the 4-oxalocrotonate tautomerase family. PptA subfamily. Homodimer.

The protein resides in the cytoplasm. This Cronobacter sakazakii (strain ATCC BAA-894) (Enterobacter sakazakii) protein is Tautomerase PptA.